The sequence spans 361 residues: MSLWVVKVGTSLLRGNEKQSTAEVIESYSACLSASLKRGDHVVLVTSGAVGLGCNRLGLSQRPVDVVALQGTAAIGQGQLMALYEAAMSRRGHTVAQVLLTRSDLGSRQRYRNASSTLKQLLDWGVLPVVNENDALSPEELRYGDNDTLSALVATAVEADQLIMLTDVDRLYSSDPRINASAEPISDVYHPHELTALEVAAGEGGAWGTGGMTTKLAAARIATASGITVLLADGRDPQVLDGLLQGRRSGTVFHPHPQPLGNRKSWLAHALKPLGTLQLDEGACDALQHRGASLLLVGVKEVEGNFEANQPVRLINPEGNELARGLCSLSSKELREAIETQMSTNRSPVVVHRDVLVLRNA.

An ATP-binding site is contributed by Lys-7. Substrate-binding residues include Ser-47, Asp-134, and Asn-146. Residues 166–167 (TD) and 209–215 (TGGMTTK) contribute to the ATP site. The 72-residue stretch at 274–345 (LGTLQLDEGA…EAIETQMSTN (72 aa)) folds into the PUA domain.

It belongs to the glutamate 5-kinase family.

The protein resides in the cytoplasm. It catalyses the reaction L-glutamate + ATP = L-glutamyl 5-phosphate + ADP. It participates in amino-acid biosynthesis; L-proline biosynthesis; L-glutamate 5-semialdehyde from L-glutamate: step 1/2. Its function is as follows. Catalyzes the transfer of a phosphate group to glutamate to form L-glutamate 5-phosphate. The protein is Glutamate 5-kinase of Prochlorococcus marinus (strain MIT 9313).